Consider the following 410-residue polypeptide: MAAAGAEAPGAWCVPCLVSLDTLQELCRKEKLTCKSIGITKRNLNNYEVEYLCDYKVVKDMEYYLVKWKGWPDSTNTWEPLQNLKCPLLLQQFFNDKHNYLSQVKKGKAITLKENHRALKPAVAEYIVKKAKQRIALQRWQDELNRRKTHKGMIFVENTVDLEGPPSDFYYINEYKPAPGISLVNEATFGCSCTDCFFEKCCPAEAGVLLAYNKNQQIKIPPGTPIYECNSRCQCGPDCPNRIVQKGTQYSLCIFRTSNGCGWGVKTLVKIKRMSFVMEYVGEVITSEEAERRGQLYDNKGITYLFDLDYESDEFTVDAARYGNVSHFVNHSCDPNLQVFNVFIDNLDTRLPRIALFSTRTINAGEELTFDYQMKGSGDVSSDSIDHSPAKKRARTVCKCGAVTCRGYLN.

In terms of domain architecture, Chromo spans 47–105 (YEVEYLCDYKVVKDMEYYLVKWKGWPDSTNTWEPLQNLKCPLLLQQFFNDKHNYLSQVK). The region spanning 189–247 (FGCSCTDCFFEKCCPAEAGVLLAYNKNQQIKIPPGTPIYECNSRCQCGPDCPNRIVQKG) is the Pre-SET domain. Cysteine 191, cysteine 193, cysteine 196, cysteine 201, cysteine 202, cysteine 229, cysteine 233, cysteine 235, and cysteine 239 together coordinate Zn(2+). In terms of domain architecture, SET spans 250 to 373 (YSLCIFRTSN…AGEELTFDYQ (124 aa)). Residues 261–263 (CGW), tyrosine 304, and 330–331 (NH) contribute to the S-adenosyl-L-methionine site. Cysteine 333 contributes to the Zn(2+) binding site. 3 positions are modified to phosphoserine: serine 381, serine 384, and serine 388. Residues 394–410 (ARTVCKCGAVTCRGYLN) enclose the Post-SET domain. Zn(2+) contacts are provided by cysteine 398, cysteine 400, and cysteine 405.

The protein belongs to the class V-like SAM-binding methyltransferase superfamily. Histone-lysine methyltransferase family. Suvar3-9 subfamily. As to quaternary structure, interacts with SMAD5. The large PER complex involved in the histone methylation is composed of at least PER2, CBX3, TRIM28, SUV39H1 and/or SUV39H2; CBX3 mediates the formation of the complex. Post-translationally, ubiquitinated by the DCX(DCAF13) E3 ubiquitin ligase complex, leading to its degradation.

The protein resides in the nucleus. The protein localises to the chromosome. It localises to the centromere. The catalysed reaction is L-lysyl(9)-[histone H3] + 3 S-adenosyl-L-methionine = N(6),N(6),N(6)-trimethyl-L-lysyl(9)-[histone H3] + 3 S-adenosyl-L-homocysteine + 3 H(+). Its function is as follows. Histone methyltransferase that specifically trimethylates 'Lys-9' of histone H3 using monomethylated H3 'Lys-9' as substrate. H3 'Lys-9' trimethylation represents a specific tag for epigenetic transcriptional repression by recruiting HP1 (CBX1, CBX3 and/or CBX5) proteins to methylated histones. Mainly functions in heterochromatin regions, thereby playing a central role in the establishment of constitutive heterochromatin at pericentric and telomere regions. H3 'Lys-9' trimethylation is also required to direct DNA methylation at pericentric repeats. SUV39H1 is targeted to histone H3 via its interaction with RB1 and is involved in many processes, such as cell cycle regulation, transcriptional repression and regulation of telomere length. May participate in regulation of higher-order chromatin organization during spermatogenesis. Recruited by the large PER complex to the E-box elements of the circadian target genes such as PER2 itself or PER1, contributes to the conversion of local chromatin to a heterochromatin-like repressive state through H3 'Lys-9' trimethylation. This chain is Histone-lysine N-methyltransferase SUV39H2 (SUV39H2), found in Bos taurus (Bovine).